A 484-amino-acid polypeptide reads, in one-letter code: Putative cysteine ligase BshC (484 aa).

A coiled-coil region spans residues 372–435; sequence RAFRDRVEGL…AARDEVLARH (64 aa).

The protein belongs to the BshC family.

In Thermus thermophilus (strain ATCC 27634 / DSM 579 / HB8), this protein is Putative cysteine ligase BshC.